The primary structure comprises 158 residues: Large ribosomal subunit protein bL19 (158 aa).

The tract at residues methionine 1–serine 35 is disordered. The segment covering glutamate 16–serine 35 has biased composition (polar residues).

This sequence belongs to the bacterial ribosomal protein bL19 family.

Functionally, this protein is located at the 30S-50S ribosomal subunit interface and may play a role in the structure and function of the aminoacyl-tRNA binding site. The sequence is that of Large ribosomal subunit protein bL19 from Prochlorococcus marinus (strain MIT 9313).